Reading from the N-terminus, the 493-residue chain is Glutamyl-tRNA(Gln) amidotransferase subunit A (493 aa).

Catalysis depends on charge relay system residues lysine 79 and serine 159. Serine 183 acts as the Acyl-ester intermediate in catalysis.

The protein belongs to the amidase family. GatA subfamily. In terms of assembly, heterotrimer of A, B and C subunits.

The enzyme catalyses L-glutamyl-tRNA(Gln) + L-glutamine + ATP + H2O = L-glutaminyl-tRNA(Gln) + L-glutamate + ADP + phosphate + H(+). Functionally, allows the formation of correctly charged Gln-tRNA(Gln) through the transamidation of misacylated Glu-tRNA(Gln) in organisms which lack glutaminyl-tRNA synthetase. The reaction takes place in the presence of glutamine and ATP through an activated gamma-phospho-Glu-tRNA(Gln). The chain is Glutamyl-tRNA(Gln) amidotransferase subunit A from Brucella canis (strain ATCC 23365 / NCTC 10854 / RM-666).